Reading from the N-terminus, the 107-residue chain is UPF0060 membrane protein ZMO1566 (107 aa).

Helical transmembrane passes span 4-24, 29-49, 55-75, and 84-104; these read LLYIPAALAEITGCFSFWAWI, SPLWLLPGIASLLLFAWLLTF, AGKAYAVYGGIYIIMSLLWSW, and HWDLIGAAFCLVGAAIILWMP.

This sequence belongs to the UPF0060 family.

The protein resides in the cell inner membrane. The protein is UPF0060 membrane protein ZMO1566 of Zymomonas mobilis subsp. mobilis (strain ATCC 31821 / ZM4 / CP4).